The chain runs to 101 residues: Small ribosomal subunit protein uS14 (101 aa).

The protein belongs to the universal ribosomal protein uS14 family. As to quaternary structure, part of the 30S ribosomal subunit. Contacts proteins S3 and S10.

Functionally, binds 16S rRNA, required for the assembly of 30S particles and may also be responsible for determining the conformation of the 16S rRNA at the A site. This is Small ribosomal subunit protein uS14 from Ruegeria sp. (strain TM1040) (Silicibacter sp.).